A 448-amino-acid chain; its full sequence is SET domain-containing protein SmydA-8, isoform B (448 aa).

Residues proline 42–alanine 273 enclose the SET domain.

It belongs to the class V-like SAM-binding methyltransferase superfamily.

In Drosophila melanogaster (Fruit fly), this protein is SET domain-containing protein SmydA-8, isoform B.